The primary structure comprises 612 residues: Coagulation factor XII (612 aa).

The N-terminal stretch at M1–S19 is a signal peptide. In terms of domain architecture, Fibronectin type-II spans V42–E90. Intrachain disulfides connect C47–C73, C61–C88, C98–C110, C104–C119, C121–C130, C135–C163, C161–C170, C178–C189, C183–C198, C200–C209, C217–C306, C240–C288, C268–C301, C355–C482, C393–C409, C401–C471, C432–C435, C498–C566, C529–C545, and C556–C587. One can recognise an EGF-like 1 domain in the interval V94–Q131. T109 is a glycosylation site (O-linked (Fuc) threonine). The 41-residue stretch at E133–L173 folds into the Fibronectin type-I domain. The 37-residue stretch at A174–D210 folds into the EGF-like 2 domain. Residues C217–C306 form the Kringle domain. Residues N251 and N282 are each glycosylated (N-linked (GlcNAc...) asparagine). The region spanning V369–A611 is the Peptidase S1 domain. The Charge relay system role is filled by H408. N-linked (GlcNAc...) asparagine glycosylation is present at N429. The Charge relay system role is filled by D457. S560 acts as the Charge relay system in catalysis.

It belongs to the peptidase S1 family. Interacts with HRG; the interaction, which is enhanced in the presence of zinc ions and inhibited by heparin-binding, inhibits factor XII autoactivation and contact-initiated coagulation. O- and N-glycosylated.

The protein localises to the secreted. The enzyme catalyses Selective cleavage of Arg-|-Ile bonds in factor VII to form factor VIIa and factor XI to form factor XIa.. Activity is promoted in the presence of negatively charged surfaces. Factor XII is a serum glycoprotein that participates in the initiation of blood coagulation, fibrinolysis, and the generation of bradykinin and angiotensin. Prekallikrein is cleaved by factor XII to form kallikrein, which then cleaves factor XII first to alpha-factor XIIa and then to beta-factor XIIa. Alpha-factor XIIa activates factor XI to factor XIa. This chain is Coagulation factor XII (F12), found in Bos taurus (Bovine).